A 614-amino-acid chain; its full sequence is Lamin-2 (614 aa).

A compositionally biased stretch (basic residues) spans 1-10 (MSAQVSKKRG). Residues 1–51 (MSAQVSKKRGGSNPPKTGQHAASSTTSRTESSATSQTIYERQEVETRTQRT) are disordered. A head region spans residues 1–76 (MSAQVSKKRG…GTAGLAGSPL (76 aa)). Positions 21 to 37 (AASSTTSRTESSATSQT) are enriched in low complexity. Positions 77–117 (SRHQEKEEFKLLNNRFANYIDTIRAQQEEISVLRRKVETVS) are coil 1A. The IF rod domain maps to 81-433 (EKEEFKLLNN…ALLRTEEERL (353 aa)). Positions 118–128 (SKEVVENQKIK) are linker 1. A coil 1B region spans residues 129–268 (ERYNLEIANL…EEIVSLRNQR (140 aa)). The linker 2 stretch occupies residues 269 to 286 (RTEITEVETRMGEEYQSK). The interval 287–426 (IVEQLNDLRA…AELATYNALL (140 aa)) is coil 2. Residues 427–611 (RTEEERLNMK…ADSSDHQKNC (185 aa)) are tail. Positions 433–454 (LNMKSPPFPSTPDSQRRGTKRR) are disordered. Positions 449–458 (RGTKRRIADS) match the Nuclear localization signal motif. Positions 462–581 (TRFRNEASAT…VARREMTQSS (120 aa)) constitute an LTD domain. C611 is lipidated: S-farnesyl cysteine. Residues 612–614 (VIM) constitute a propeptide, removed in mature form.

Belongs to the intermediate filament family.

The protein resides in the nucleus inner membrane. Functionally, intermediate filament (IF) protein, component of the nuclear lamina, a fibrous layer on the nucleoplasmic side of the inner nuclear membrane, which is thought to provide a framework for the nuclear envelope. This chain is Lamin-2, found in Hypsibius exemplaris (Freshwater tardigrade).